We begin with the raw amino-acid sequence, 221 residues long: GFP-like non-fluorescent chromoprotein (221 aa).

The segment at residues 62-64 (QYG) is a cross-link (2-iminomethyl-5-imidazolinone (Gln-Gly)). A 2,3-didehydrotyrosine modification is found at Tyr63.

Belongs to the GFP family. As to quaternary structure, homotetramer. Post-translationally, contains a chromophore consisting of modified amino acid residues. The chromophore is formed by autocatalytic backbone condensation between Xaa-N and Gly-(N+2), oxidation of Tyr-(N+1) to didehydrotyrosine, and formation of a double bond to the alpha-amino nitrogen of residue Xaa-N. Maturation of the chromophore requires nothing other than molecular oxygen. The precise stereochemistry of the tyrosine has not been determined.

Non-fluorescent pigment protein that is lilac in color. The chain is GFP-like non-fluorescent chromoprotein from Goniopora tenuidens (Anemone coral).